Here is a 255-residue protein sequence, read N- to C-terminus: Tablysin 15 (255 aa).

The N-terminal stretch at 1-23 (MTSIPVSSFLLAALVLQYATSDA) is a signal peptide. 3 disulfides stabilise this stretch: Cys-27–Cys-40, Cys-31–Cys-117, and Cys-49–Cys-110. Residues 32–34 (RGD) carry the Cell attachment site motif. One can recognise an SCP domain in the interval 67 to 211 (LSKINDVRDH…KARALLTCNF (145 aa)). Residues Trp-82, His-153, and Lys-156 each contribute to the leukotriene E4 site. Disulfide bonds link Cys-192–Cys-209 and Cys-232–Cys-243.

Belongs to the CRISP family. Expressed in salivary glands.

It is found in the secreted. Functionally, anti-inflammatory scavenger of eicosanoids and antithrombotic protein that inhibits platelets aggregation induced by collagen, ADP and convulxin (GPVI agonist). Exhibits high affinity binding for glycoprotein IIb-IIIa receptor (ITGA2B/ITGB3) and endothelial cell alphaVbeta3 (ITGAV/ITGB3) integrins, but not for alpha-5/beta-1 or alpha-2/beta-1. Accordingly, it blocks endothelial cell adhesion to vitronectin (IC(50)~1 nM) and marginally to fibronectin (IC(50)~1 uM), but not to collagen. It also inhibits fibroblast growth factor (FGF)-induced endothelial cell proliferation, and attenuates tube formation in vitro. In addition, it dose-dependently attenuates thrombus formation to collagen under flow. Also binds proinflammatory cysteinyl leukotrienes (leukotrienes C4 (LTC4), D4 (LTD4) and E4 (LTE4)) with submicromolar affinities. The polypeptide is Tablysin 15 (Tabanus yao (Horsefly)).